The following is a 751-amino-acid chain: Semaphorin-3C (751 aa).

The first 21 residues, 1–21, serve as a signal peptide directing secretion; it reads MAFQAVCILVGVFVCSTYVKG. A Sema domain is found at 28–511; that stretch reads RVYLTFDELR…SNEGLAQVSL (484 aa). The N-linked (GlcNAc...) asparagine glycan is linked to Asn-81. An intrachain disulfide couples Cys-101 to Cys-112. Residue Asn-123 is glycosylated (N-linked (GlcNAc...) asparagine). Intrachain disulfides connect Cys-130/Cys-139, Cys-266/Cys-378, and Cys-290/Cys-338. Asn-268 carries N-linked (GlcNAc...) asparagine glycosylation. Residue Asn-465 is glycosylated (N-linked (GlcNAc...) asparagine). Cys-514 and Cys-532 are disulfide-bonded. One can recognise an Ig-like C2-type domain in the interval 571–655; that stretch reads AYRNAAEIVQ…TENSFKQTIA (85 aa). Residues Asn-585 and Asn-586 are each glycosylated (N-linked (GlcNAc...) asparagine). Cys-592 and Cys-643 form a disulfide bridge. Over residues 712 to 731 the composition is skewed to basic and acidic residues; it reads TRQQHQQGEESQKMRGDYGK. The tract at residues 712-751 is disordered; the sequence is TRQQHQQGEESQKMRGDYGKLKALINSRKSRNRRNQLPES.

The protein belongs to the semaphorin family. Interacts with PLXND1.

It is found in the secreted. Binds to plexin family members and plays an important role in the regulation of developmental processes. Required for normal cardiovascular development during embryogenesis. Functions as attractant for growing axons, and thereby plays an important role in axon growth and axon guidance. The sequence is that of Semaphorin-3C (SEMA3C) from Bos taurus (Bovine).